The chain runs to 860 residues: Protein argonaute-3 (860 aa).

Residues 230 to 349 enclose the PAZ domain; that stretch reads PVIQFMCEVL…LPLEVCNIVA (120 aa). The Piwi domain maps to 518 to 819; the sequence is LIIVILPGKT…VAFRARYHLV (302 aa). An interaction with guide RNA region spans residues 530–567; sequence YAEVKRVGDTLLGMATQCVQVKNVVKTSPQTLSNLCLK. A divalent metal cation contacts are provided by Asp598, Glu638, and Asp670. The segment at 758 to 805 is interaction with guide RNA; that stretch reads QGTSRPSHYYVLWDDNCFTADEFQLLTYQLCHTYVRCTRSVSIPAPAY. His808 serves as a coordination point for a divalent metal cation.

Belongs to the argonaute family. Ago subfamily.

It localises to the cytoplasm. The protein resides in the P-body. The catalysed reaction is Endonucleolytic cleavage to 5'-phosphomonoester.. In terms of biological role, required for RNA-mediated gene silencing (RNAi). Binds to short RNAs such as microRNAs (miRNAs) and represses the translation of mRNAs which are complementary to them. Possesses RNA slicer activity but only on select RNAs bearing 5'- and 3'-flanking sequences to the region of guide-target complementarity. The protein is Protein argonaute-3 (ago3) of Danio rerio (Zebrafish).